An 864-amino-acid polypeptide reads, in one-letter code: Leucine--tRNA ligase (864 aa).

Residues 42 to 52 (PYPSGKLHMGH) carry the 'HIGH' region motif. Residues 624 to 628 (KMSKS) carry the 'KMSKS' region motif. An ATP-binding site is contributed by K627.

Belongs to the class-I aminoacyl-tRNA synthetase family.

It localises to the cytoplasm. The enzyme catalyses tRNA(Leu) + L-leucine + ATP = L-leucyl-tRNA(Leu) + AMP + diphosphate. This Burkholderia cenocepacia (strain ATCC BAA-245 / DSM 16553 / LMG 16656 / NCTC 13227 / J2315 / CF5610) (Burkholderia cepacia (strain J2315)) protein is Leucine--tRNA ligase.